Reading from the N-terminus, the 146-residue chain is Hemoglobin subunit beta (146 aa).

Position 1 is an N-acetylvaline (Val1). Residues 2–146 (HLTADEKVSL…VANALAHKYH (145 aa)) form the Globin domain. Phosphoserine is present on Ser44. Residue Lys59 is modified to N6-acetyllysine. His63 contacts heme b. The residue at position 82 (Lys82) is an N6-acetyllysine. His92 contacts heme b. S-nitrosocysteine is present on Cys93. Lys144 carries the post-translational modification N6-acetyllysine.

The protein belongs to the globin family. In terms of assembly, heterotetramer of two alpha chains and two beta chains. Red blood cells.

In terms of biological role, involved in oxygen transport from the lung to the various peripheral tissues. The polypeptide is Hemoglobin subunit beta (Tamias striatus (Eastern chipmunk)).